The primary structure comprises 72 residues: DNA-directed RNA polymerase subunit Rpo10 (72 aa).

4 residues coordinate Zn(2+): Cys7, Cys10, Cys45, and Cys46.

Belongs to the archaeal Rpo10/eukaryotic RPB10 RNA polymerase subunit family. In terms of assembly, part of the RNA polymerase complex. Zn(2+) is required as a cofactor.

The protein resides in the cytoplasm. The enzyme catalyses RNA(n) + a ribonucleoside 5'-triphosphate = RNA(n+1) + diphosphate. Functionally, DNA-dependent RNA polymerase (RNAP) catalyzes the transcription of DNA into RNA using the four ribonucleoside triphosphates as substrates. In Methanopyrus kandleri (strain AV19 / DSM 6324 / JCM 9639 / NBRC 100938), this protein is DNA-directed RNA polymerase subunit Rpo10.